The primary structure comprises 420 residues: MTVSKLRPVIASRKSFPPWMIILGVLGVLAILGLIIGLLVHFLAVENKIYYYQGSFKVLNIPYDRNYERETSLESNYLSKILEIKMVDAFESSNIYKQYINSQIITLVPENNSVTAHIWLVFKDPWSNKENLRRRIESILHQMLENNSGSLTTDPGSLKLTEITKVDAEKIINNRCGRRPRMSATYDRITGGSTAQKGEWPWQASLRVNGKHHCGASLIGERFLLTAAHCFLRTNNPKNLTVSFGTRVTPAYMQHYVEEVIIHEDYVKGQHHDDVAIIKLTEKVSFRNDVHRVCLPEATQVFPPGEGVVVTGWGSLSYNGKSPLLLQKASIKIIDTNACNSEEAYGGRIMDTMLCAGYMEGYVDACQGDSGGPLVHPNSRDIWYLVGIVSWGHECGRVNKPGVYMRVTSYRDWIASKTGI.

Residues 1–19 (MTVSKLRPVIASRKSFPPW) are Cytoplasmic-facing. Residues 20-40 (MIILGVLGVLAILGLIIGLLV) form a helical; Signal-anchor for type II membrane protein membrane-spanning segment. The Extracellular segment spans residues 41–420 (HFLAVENKIY…RDWIASKTGI (380 aa)). Residues 48–165 (KIYYYQGSFK…GSLKLTEITK (118 aa)) form the SEA domain. N-linked (GlcNAc...) asparagine glycosylation is found at N111 and N146. The region spanning 189–419 (ITGGSTAQKG…YRDWIASKTG (231 aa)) is the Peptidase S1 domain. A disulfide bond links C214 and C230. The active-site Charge relay system is the H229. A glycan (N-linked (GlcNAc...) asparagine) is linked at N239. D274 functions as the Charge relay system in the catalytic mechanism. Intrachain disulfides connect C339/C355 and C366/C395. The active-site Charge relay system is S370.

Belongs to the peptidase S1 family.

The protein localises to the membrane. Its subcellular location is the cell membrane. With respect to regulation, inhibited by aprotinin, leupeptin, benzamidine, SERPINA1, SPINT1 and SPINT2. Functionally, serine protease. In Rattus norvegicus (Rat), this protein is Transmembrane protease serine 11B-like protein (Tmprss11bnl).